A 773-amino-acid polypeptide reads, in one-letter code: Polyribonucleotide nucleotidyltransferase (773 aa).

Mg(2+) is bound by residues aspartate 490 and aspartate 496. The KH domain maps to 557-616 (PKIDTITIPVDKIKVVIGKGGEQIDKIIAETGVKIDIDDEGLCSIFSSDQAAIDRAKEII). The S1 motif domain occupies 626–694 (GEIYDAKVVR…DKGRVDASMR (69 aa)). A compositionally biased stretch (basic and acidic residues) spans 700–721 (PEGYVEPERKPRERRENGDRRK). A disordered region spans residues 700–773 (PEGYVEPERK…FPELSTKKPE (74 aa)). Low complexity predominate over residues 739–748 (RNNQGNKVGN). Basic and acidic residues predominate over residues 751 to 773 (FELRERKSHIDEEFPELSTKKPE).

It belongs to the polyribonucleotide nucleotidyltransferase family. Requires Mg(2+) as cofactor.

Its subcellular location is the cytoplasm. The catalysed reaction is RNA(n+1) + phosphate = RNA(n) + a ribonucleoside 5'-diphosphate. In terms of biological role, involved in mRNA degradation. Catalyzes the phosphorolysis of single-stranded polyribonucleotides processively in the 3'- to 5'-direction. This is Polyribonucleotide nucleotidyltransferase from Lactococcus lactis subsp. lactis (strain IL1403) (Streptococcus lactis).